Here is a 407-residue protein sequence, read N- to C-terminus: Tyrosine--tRNA ligase (407 aa).

Tyr-35 serves as a coordination point for L-tyrosine. Positions 40-49 (PTADSLHVGH) match the 'HIGH' region motif. The L-tyrosine site is built by Tyr-168 and Gln-172. The 'KMSKS' region signature appears at 228 to 232 (KMGKT). Residue Lys-231 coordinates ATP. In terms of domain architecture, S4 RNA-binding spans 341–405 (NLLVDLLVKC…RGKKNFNRIV (65 aa)).

Belongs to the class-I aminoacyl-tRNA synthetase family. TyrS type 1 subfamily. In terms of assembly, homodimer.

It is found in the cytoplasm. It carries out the reaction tRNA(Tyr) + L-tyrosine + ATP = L-tyrosyl-tRNA(Tyr) + AMP + diphosphate + H(+). Its function is as follows. Catalyzes the attachment of tyrosine to tRNA(Tyr) in a two-step reaction: tyrosine is first activated by ATP to form Tyr-AMP and then transferred to the acceptor end of tRNA(Tyr). The sequence is that of Tyrosine--tRNA ligase from Clostridium botulinum (strain Kyoto / Type A2).